Consider the following 203-residue polypeptide: Small ribosomal subunit protein uS4 (203 aa).

Residues 93 to 156 (RRLDNVVYRL…MKVPAILEAV (64 aa)) enclose the S4 RNA-binding domain.

This sequence belongs to the universal ribosomal protein uS4 family. In terms of assembly, part of the 30S ribosomal subunit. Contacts protein S5. The interaction surface between S4 and S5 is involved in control of translational fidelity.

Its function is as follows. One of the primary rRNA binding proteins, it binds directly to 16S rRNA where it nucleates assembly of the body of the 30S subunit. In terms of biological role, with S5 and S12 plays an important role in translational accuracy. The chain is Small ribosomal subunit protein uS4 from Streptococcus equi subsp. equi (strain 4047).